We begin with the raw amino-acid sequence, 63 residues long: Adipokinetic prohormone type 1 (63 aa).

Positions methionine 1–alanine 22 are cleaved as a signal peptide. Glutamine 23 carries the pyrrolidone carboxylic acid modification. Threonine 32 is subject to Threonine amide.

Belongs to the AKH/HRTH/RPCH family. As to quaternary structure, adipokinetic hormone precursor-related peptide (APRP) can form three type of disulfide-bond dimers: p1 (alpha-alpha), p2 (alpha-beta), and p3 (beta-beta).

It is found in the secreted. Functionally, this hormone, released from cells in the corpora cardiaca, causes release of diglycerides from the fat body and stimulation of muscles to use these diglycerides as an energy source during energy-demanding processes. The polypeptide is Adipokinetic prohormone type 1 (Schistocerca nitens (Vagrant locust)).